The primary structure comprises 135 residues: Small ribosomal subunit protein uS12 (135 aa).

The tract at residues 1 to 20 (MPTINQLVRKGRHSKVTKSK) is disordered. The segment covering 9–18 (RKGRHSKVTK) has biased composition (basic residues).

It belongs to the universal ribosomal protein uS12 family. In terms of assembly, part of the 30S ribosomal subunit. Contacts proteins S8 and S17. May interact with IF1 in the 30S initiation complex.

Functionally, with S4 and S5 plays an important role in translational accuracy. In terms of biological role, interacts with and stabilizes bases of the 16S rRNA that are involved in tRNA selection in the A site and with the mRNA backbone. Located at the interface of the 30S and 50S subunits, it traverses the body of the 30S subunit contacting proteins on the other side and probably holding the rRNA structure together. The combined cluster of proteins S8, S12 and S17 appears to hold together the shoulder and platform of the 30S subunit. The polypeptide is Small ribosomal subunit protein uS12 (Lactobacillus acidophilus (strain ATCC 700396 / NCK56 / N2 / NCFM)).